Consider the following 523-residue polypeptide: Translation initiation factor eIF2B subunit delta (523 aa).

The tract at residues 1–147 (MAAVAVAVRE…PSGVKRLPEY (147 aa)) is disordered. Ala2 carries the N-acetylalanine modification. Ser12 carries the phosphoserine modification. The span at 30-40 (EMTKEEKLQLR) shows a compositional bias: basic and acidic residues. Over residues 41–51 (KEKKQQKKKRK) the composition is skewed to basic residues. At Thr86 the chain carries Phosphothreonine. The span at 87-121 (PREKVPAGRSKAELRAERRAKQEAERALKQARKGE) shows a compositional bias: basic and acidic residues. Residue Ser130 is modified to Phosphoserine. Residues 170-179 (RKDYGSKVSL) form a may bind the chemical integrated stress response (ISR) inhibitor ISRIB region.

Belongs to the eIF-2B alpha/beta/delta subunits family. In terms of assembly, component of the translation initiation factor 2B (eIF2B) complex which is a heterodecamer of two sets of five different subunits: alpha, beta, gamma, delta and epsilon. Subunits alpha, beta and delta comprise a regulatory subcomplex and subunits epsilon and gamma comprise a catalytic subcomplex. Within the complex, the hexameric regulatory complex resides at the center, with the two heterodimeric catalytic subcomplexes bound on opposite sides.

It localises to the cytoplasm. The protein localises to the cytosol. With respect to regulation, activated by the chemical integrated stress response (ISR) inhibitor ISRIB which stimulates guanine nucleotide exchange factor activity for both phosphorylated and unphosphorylated eIF2. Its function is as follows. Acts as a component of the translation initiation factor 2B (eIF2B) complex, which catalyzes the exchange of GDP for GTP on eukaryotic initiation factor 2 (eIF2) gamma subunit. Its guanine nucleotide exchange factor activity is repressed when bound to eIF2 complex phosphorylated on the alpha subunit, thereby limiting the amount of methionyl-initiator methionine tRNA available to the ribosome and consequently global translation is repressed. This Homo sapiens (Human) protein is Translation initiation factor eIF2B subunit delta (EIF2B4).